Here is a 282-residue protein sequence, read N- to C-terminus: Putative phosphatase MPN_383 (282 aa).

Asp-11 (nucleophile) is an active-site residue. Asp-11 contributes to the Mg(2+) binding site. Leu-12 provides a ligand contact to phosphate. Asp-13 serves as a coordination point for Mg(2+). Residues Thr-45–Gly-46 and Lys-207 each bind phosphate. Asp-230 serves as a coordination point for Mg(2+). Phosphate is bound at residue Asn-233.

The protein belongs to the HAD-like hydrolase superfamily. Cof family. Mg(2+) serves as cofactor.

This Mycoplasma pneumoniae (strain ATCC 29342 / M129 / Subtype 1) (Mycoplasmoides pneumoniae) protein is Putative phosphatase MPN_383.